Consider the following 68-residue polypeptide: Large ribosomal subunit protein bL33c (68 aa).

The protein belongs to the bacterial ribosomal protein bL33 family.

It is found in the plastid. It localises to the chloroplast. The protein is Large ribosomal subunit protein bL33c of Piper cenocladum (Ant piper).